We begin with the raw amino-acid sequence, 363 residues long: Aspartate-semialdehyde dehydrogenase (363 aa).

NADP(+) is bound by residues T15, G16, S17, V18, S40, S43, and L87. The active-site Acyl-thioester intermediate is C154. G186 is a binding site for NADP(+). H251 (proton acceptor) is an active-site residue. N341 provides a ligand contact to NADP(+).

Belongs to the aspartate-semialdehyde dehydrogenase family. In terms of assembly, homotetramer; dimer of dimers.

It localises to the cytoplasm. It is found in the cytosol. Its subcellular location is the nucleus. It carries out the reaction L-aspartate 4-semialdehyde + phosphate + NADP(+) = 4-phospho-L-aspartate + NADPH + H(+). Its pathway is amino-acid biosynthesis; L-methionine biosynthesis via de novo pathway; L-homoserine from L-aspartate: step 2/3. It participates in amino-acid biosynthesis; L-threonine biosynthesis; L-threonine from L-aspartate: step 2/5. Its activity is regulated as follows. Inhibited by 4-amino-3-hydroxynaphthalene-1-sulfonic acid and the competitive inhibitor 1,4-benzoquinone and derivates such as 2-chloro-3-methoxy-1,4-naphthoquinone, 2,3-dichloro-1,4-naphthoquinone, 2-chloro-1,4-naphthoquinone, 2-bromo-1,4-naphthoquinone and 2,3-dichloro-5,8-dihydroxy-1,4-naphthoquinone. In terms of biological role, catalyzes the NADPH-dependent formation of L-aspartate 4-semialdehyde (L-ASA) by the reductive dephosphorylation of 4-phospho-L-aspartate. Mediates the second step in the biosynthesis of amino acids that derive from aspartate (the aspartate family of amino acids), including methioinine and threonine, the latter of which is a precursor to isoleucine. The chain is Aspartate-semialdehyde dehydrogenase from Aspergillus fumigatus (strain ATCC MYA-4609 / CBS 101355 / FGSC A1100 / Af293) (Neosartorya fumigata).